Here is a 496-residue protein sequence, read N- to C-terminus: Glycerol kinase (496 aa).

Thr11 provides a ligand contact to ADP. The ATP site is built by Thr11, Thr12, and Ser13. Thr11 is a binding site for sn-glycerol 3-phosphate. Residue Arg15 coordinates ADP. Residues Arg81, Glu82, Tyr133, and Asp242 each contribute to the sn-glycerol 3-phosphate site. Glycerol is bound by residues Arg81, Glu82, Tyr133, Asp242, and Gln243. Positions 264 and 307 each coordinate ADP. Thr264, Gly307, and Gln311 together coordinate ATP. Asn413 serves as a coordination point for ADP.

This sequence belongs to the FGGY kinase family.

The catalysed reaction is glycerol + ATP = sn-glycerol 3-phosphate + ADP + H(+). The protein operates within polyol metabolism; glycerol degradation via glycerol kinase pathway; sn-glycerol 3-phosphate from glycerol: step 1/1. Inhibited by fructose 1,6-bisphosphate (FBP). Its function is as follows. Key enzyme in the regulation of glycerol uptake and metabolism. Catalyzes the phosphorylation of glycerol to yield sn-glycerol 3-phosphate. This Borrelia duttonii (strain Ly) protein is Glycerol kinase.